Consider the following 227-residue polypeptide: Lipoprotein-releasing system ATP-binding protein LolD (227 aa).

The ABC transporter domain occupies 5–227 (LICQNITKHY…QDGILRESNS (223 aa)). 41 to 48 (GSSGSGKS) is a binding site for ATP.

This sequence belongs to the ABC transporter superfamily. Lipoprotein translocase (TC 3.A.1.125) family. The complex is composed of two ATP-binding proteins (LolD) and two transmembrane proteins (LolC and LolE).

The protein localises to the cell inner membrane. Its function is as follows. Part of the ABC transporter complex LolCDE involved in the translocation of mature outer membrane-directed lipoproteins, from the inner membrane to the periplasmic chaperone, LolA. Responsible for the formation of the LolA-lipoprotein complex in an ATP-dependent manner. The sequence is that of Lipoprotein-releasing system ATP-binding protein LolD from Histophilus somni (strain 129Pt) (Haemophilus somnus).